The sequence spans 1072 residues: DNA-directed RNA polymerase subunit beta (1072 aa).

The protein belongs to the RNA polymerase beta chain family. In plastids the minimal PEP RNA polymerase catalytic core is composed of four subunits: alpha, beta, beta', and beta''. When a (nuclear-encoded) sigma factor is associated with the core the holoenzyme is formed, which can initiate transcription.

Its subcellular location is the plastid. It localises to the chloroplast. It catalyses the reaction RNA(n) + a ribonucleoside 5'-triphosphate = RNA(n+1) + diphosphate. Its function is as follows. DNA-dependent RNA polymerase catalyzes the transcription of DNA into RNA using the four ribonucleoside triphosphates as substrates. The chain is DNA-directed RNA polymerase subunit beta from Capsella bursa-pastoris (Shepherd's purse).